The following is a 250-amino-acid chain: 3-deoxy-manno-octulosonate cytidylyltransferase (250 aa).

This sequence belongs to the KdsB family.

It is found in the cytoplasm. The catalysed reaction is 3-deoxy-alpha-D-manno-oct-2-ulosonate + CTP = CMP-3-deoxy-beta-D-manno-octulosonate + diphosphate. Its pathway is nucleotide-sugar biosynthesis; CMP-3-deoxy-D-manno-octulosonate biosynthesis; CMP-3-deoxy-D-manno-octulosonate from 3-deoxy-D-manno-octulosonate and CTP: step 1/1. It participates in bacterial outer membrane biogenesis; lipopolysaccharide biosynthesis. Its function is as follows. Activates KDO (a required 8-carbon sugar) for incorporation into bacterial lipopolysaccharide in Gram-negative bacteria. This Xanthomonas campestris pv. campestris (strain 8004) protein is 3-deoxy-manno-octulosonate cytidylyltransferase.